The sequence spans 187 residues: Decorin-binding protein B (187 aa).

An N-terminal signal peptide occupies residues methionine 1–alanine 20.

It belongs to the decorin-binding protein family.

In terms of biological role, binds to decorin which may mediate the adherence of B.burgdorferi to collagen fibers in skin and other tissues. The sequence is that of Decorin-binding protein B (dbpB) from Borreliella burgdorferi (strain ATCC 35210 / DSM 4680 / CIP 102532 / B31) (Borrelia burgdorferi).